The sequence spans 397 residues: Tryptophan synthase beta chain (397 aa).

The residue at position 87 (Lys-87) is an N6-(pyridoxal phosphate)lysine.

The protein belongs to the TrpB family. Tetramer of two alpha and two beta chains. It depends on pyridoxal 5'-phosphate as a cofactor.

It catalyses the reaction (1S,2R)-1-C-(indol-3-yl)glycerol 3-phosphate + L-serine = D-glyceraldehyde 3-phosphate + L-tryptophan + H2O. It participates in amino-acid biosynthesis; L-tryptophan biosynthesis; L-tryptophan from chorismate: step 5/5. In terms of biological role, the beta subunit is responsible for the synthesis of L-tryptophan from indole and L-serine. The chain is Tryptophan synthase beta chain from Salmonella choleraesuis (strain SC-B67).